The chain runs to 326 residues: uncharacterized protein (326 aa).

Solcar repeat units follow at residues Gln20 to Lys107, Leu120 to Phe219, and Lys231 to Ser322. A run of 6 helical transmembrane segments spans residues Ile24–Val40, Gly84–Cys104, Leu126–Leu143, Val195–Tyr213, Leu237–Phe254, and Gly297–Tyr316.

Belongs to the mitochondrial carrier (TC 2.A.29) family.

The protein localises to the mitochondrion inner membrane. This is an uncharacterized protein from Saccharomyces cerevisiae (strain ATCC 204508 / S288c) (Baker's yeast).